The following is a 274-amino-acid chain: Subtilisin DY (274 aa).

Q2 serves as a coordination point for Ca(2+). The region spanning 5–273 is the Peptidase S8 domain; the sequence is PYGIPLIKAD…KGLINVEAAA (269 aa). Residue D32 is the Charge relay system of the active site. D41 is a binding site for Ca(2+). The active-site Charge relay system is the H63. Residues L74, N76, V80, A168, Y170, and V173 each contribute to the Ca(2+) site. S220 acts as the Charge relay system in catalysis.

The protein belongs to the peptidase S8 family. Ca(2+) serves as cofactor.

The protein localises to the secreted. The enzyme catalyses Hydrolysis of proteins with broad specificity for peptide bonds, and a preference for a large uncharged residue in P1. Hydrolyzes peptide amides.. Its function is as follows. Subtilisin is an extracellular alkaline serine protease, it catalyzes the hydrolysis of proteins and peptide amides. This is Subtilisin DY (apr) from Bacillus licheniformis.